A 267-amino-acid polypeptide reads, in one-letter code: Small ribosomal subunit protein uS2 (267 aa).

The segment at 225–267 (LREQELEGEEQEEAAPATEEEKKELIEEAVAEGEAEETEEEEK) is disordered. The segment covering 251 to 267 (EEAVAEGEAEETEEEEK) has biased composition (acidic residues).

Belongs to the universal ribosomal protein uS2 family.

The sequence is that of Small ribosomal subunit protein uS2 from Nitratiruptor sp. (strain SB155-2).